Consider the following 265-residue polypeptide: Undecaprenyl-diphosphatase (265 aa).

Transmembrane regions (helical) follow at residues 1–21, 39–59, 83–103, 114–134, 144–164, 188–208, 218–238, and 244–264; these read MDWFQALVLALIQGLTEFLPI, QGLAFDVAVHLGTLLAVMMYY, LKLGLLVALATIPAVVFGFLG, ALVIAITTLVFGALLWASDAF, LGVAGAIFIGLAQALALIPGT, SFLLSIPVILGAGLLKTKDLI, MMALGVIVSAVTAYLTIVFFI, and VGMLPFVVYRLILGVALLFWL.

This sequence belongs to the UppP family.

It is found in the cell inner membrane. The catalysed reaction is di-trans,octa-cis-undecaprenyl diphosphate + H2O = di-trans,octa-cis-undecaprenyl phosphate + phosphate + H(+). In terms of biological role, catalyzes the dephosphorylation of undecaprenyl diphosphate (UPP). Confers resistance to bacitracin. This is Undecaprenyl-diphosphatase from Alcanivorax borkumensis (strain ATCC 700651 / DSM 11573 / NCIMB 13689 / SK2).